Here is a 367-residue protein sequence, read N- to C-terminus: UDP-N-acetylglucosamine--N-acetylmuramyl-(pentapeptide) pyrophosphoryl-undecaprenol N-acetylglucosamine transferase (367 aa).

Residues 13–15, Asn-125, Arg-165, Ser-192, and Gln-293 each bind UDP-N-acetyl-alpha-D-glucosamine; that span reads TGG.

Belongs to the glycosyltransferase 28 family. MurG subfamily.

The protein localises to the cell inner membrane. It catalyses the reaction di-trans,octa-cis-undecaprenyl diphospho-N-acetyl-alpha-D-muramoyl-L-alanyl-D-glutamyl-meso-2,6-diaminopimeloyl-D-alanyl-D-alanine + UDP-N-acetyl-alpha-D-glucosamine = di-trans,octa-cis-undecaprenyl diphospho-[N-acetyl-alpha-D-glucosaminyl-(1-&gt;4)]-N-acetyl-alpha-D-muramoyl-L-alanyl-D-glutamyl-meso-2,6-diaminopimeloyl-D-alanyl-D-alanine + UDP + H(+). Its pathway is cell wall biogenesis; peptidoglycan biosynthesis. In terms of biological role, cell wall formation. Catalyzes the transfer of a GlcNAc subunit on undecaprenyl-pyrophosphoryl-MurNAc-pentapeptide (lipid intermediate I) to form undecaprenyl-pyrophosphoryl-MurNAc-(pentapeptide)GlcNAc (lipid intermediate II). In Jannaschia sp. (strain CCS1), this protein is UDP-N-acetylglucosamine--N-acetylmuramyl-(pentapeptide) pyrophosphoryl-undecaprenol N-acetylglucosamine transferase.